We begin with the raw amino-acid sequence, 538 residues long: Cytochrome P450 18a1 (538 aa).

A helical membrane pass occupies residues Gln-24–Val-44. A heme-binding site is contributed by Cys-466.

The protein belongs to the cytochrome P450 family. Heme is required as a cofactor. As to expression, expressed in body wall (epidermal and muscle cells) and mid- and hind-gut.

The protein localises to the endoplasmic reticulum membrane. It localises to the microsome membrane. Probably involved in steroid hormones biosynthesis. This Drosophila melanogaster (Fruit fly) protein is Cytochrome P450 18a1 (Cyp18a1).